Reading from the N-terminus, the 538-residue chain is Translation initiation factor IF-3, chloroplastic (538 aa).

Residues 1–140 (MVRSSCLQCD…VTQRKEIAVF (140 aa)) constitute a chloroplast transit peptide. Positions 141-290 (SASGQAAEPE…EEVEEEQEVL (150 aa)) are head. Disordered regions lie at residues 146-165 (AAEPEGAEPLKRPFPSPAAK) and 188-210 (RTDSTYGRGPRSTSFTDISNWPS). The IF-3 like stretch occupies residues 291 to 474 (SWADRRRALA…LILNLAPAGE (184 aa)). Residues 484 to 538 (AERDRKAAAEEEGEGDDLDFVDENEDEDVEGEGEEEEAEELEEETAEGTEVPTRS) are disordered. Residues 493-530 (EEEGEGDDLDFVDENEDEDVEGEGEEEEAEELEEETAE) are compositionally biased toward acidic residues.

The protein belongs to the IF-3 family. In terms of assembly, monomer. The N-terminus is blocked.

The protein resides in the plastid. It is found in the chloroplast. Functionally, involved in chloroplast protein synthesis. It enhances the poly(A,U,G)-dependent binding of the initiator tRNA to chloroplast 30S subunits. The sequence is that of Translation initiation factor IF-3, chloroplastic from Euglena gracilis.